We begin with the raw amino-acid sequence, 219 residues long: MRFALTLTAFVGSVAALSITSPKKDQDVDLSEKTTIEWSSVSSDPSSFDIYLVKMNSYPPVNKLVAENVKTSEGSYTIDGVSADNGSGYQINFVSRDPQNTGILAQSQQFKVESSGSSTTSDSTSSASATGSASTSSSSTGTVSSTASASATASASATASSTLSKSASGTASKTASATGSETSGASASSTSSPTTTPNGAGSLTVPAGSLLLGLVALAL.

Residues 1 to 16 (MRFALTLTAFVGSVAA) form the signal peptide. Asn85 carries an N-linked (GlcNAc...) asparagine glycan. Disordered stretches follow at residues 107-144 (SQQFKVESSGSSTTSDSTSSASATGSASTSSSSTGTVS) and 160-205 (SSTL…SLTV). The segment covering 114–144 (SSGSSTTSDSTSSASATGSASTSSSSTGTVS) has biased composition (low complexity). Asn198 carries GPI-like-anchor amidated asparagine lipidation. Residues 199 to 219 (GAGSLTVPAGSLLLGLVALAL) constitute a propeptide, removed in mature form.

Belongs to the UPF0619 family. In terms of processing, the GPI-like anchor contains a phosphoceramide lipid group. The anchor position has not been determined.

The protein resides in the cell membrane. This is UPF0619 GPI-anchored membrane protein AFUA_3G00880 from Aspergillus fumigatus (strain ATCC MYA-4609 / CBS 101355 / FGSC A1100 / Af293) (Neosartorya fumigata).